The following is a 368-amino-acid chain: Cobalt-precorrin-5B C(1)-methyltransferase (368 aa).

The protein belongs to the CbiD family.

It catalyses the reaction Co-precorrin-5B + S-adenosyl-L-methionine = Co-precorrin-6A + S-adenosyl-L-homocysteine. The protein operates within cofactor biosynthesis; adenosylcobalamin biosynthesis; cob(II)yrinate a,c-diamide from sirohydrochlorin (anaerobic route): step 6/10. In terms of biological role, catalyzes the methylation of C-1 in cobalt-precorrin-5B to form cobalt-precorrin-6A. The polypeptide is Cobalt-precorrin-5B C(1)-methyltransferase (Brucella ovis (strain ATCC 25840 / 63/290 / NCTC 10512)).